A 305-amino-acid chain; its full sequence is Superkiller complex protein 8 (305 aa).

7 WD repeats span residues 14-57 (AHED…LELQ), 62-101 (GHQL…QIKS), 104-143 (AGPV…KEHS), 146-187 (TRGK…HTLE), 188-227 (GHAM…LAGT), 230-269 (GHGS…CVNT), and 272-305 (DHQD…DCPM).

The protein belongs to the SKI8 family. Component of the PAF1 complex. Component of the SKI complex.

It localises to the nucleus. The protein resides in the cytoplasm. Functionally, component of the PAF1 complex (PAF1C) which has multiple functions during transcription by RNA polymerase II and is implicated in regulation of development and maintenance of embryonic stem cell pluripotency. PAF1C associates with RNA polymerase II through interaction with POLR2A CTD non-phosphorylated and 'Ser-2'- and 'Ser-5'-phosphorylated forms and is involved in transcriptional elongation, acting both independently and synergistically with TCEA1 and in cooperation with the DSIF complex and HTATSF1. Also acts as a component of the SKI complex, a multiprotein complex that assists the RNA-degrading exosome during the mRNA decay and quality-control pathways. The SKI complex catalyzes mRNA extraction from 80S ribosomal complexes in the 3'-5' direction and channels mRNA to the cytosolic exosome for degradation. This is Superkiller complex protein 8 (skic8) from Danio rerio (Zebrafish).